Reading from the N-terminus, the 82-residue chain is UPF0291 protein PEPE_0871 (82 aa).

The protein belongs to the UPF0291 family.

The protein resides in the cytoplasm. This is UPF0291 protein PEPE_0871 from Pediococcus pentosaceus (strain ATCC 25745 / CCUG 21536 / LMG 10740 / 183-1w).